The chain runs to 92 residues: Phospholemman (92 aa).

Positions 1 to 20 (MAPLHHILVLCVGFLTTATA) are cleaved as a signal peptide. Residues 21 to 35 (EAPQEHDPFTYDYQS) are Extracellular-facing. A helical membrane pass occupies residues 36–56 (LRIGGLIIAGILFILGILIVL). Residues 57-92 (SRRCRCKFNQQQRTGEPDEEEGTFRSSIRRLSTRRR) lie on the Cytoplasmic side of the membrane. Residue Cys60 is the site of S-palmitoyl cysteine attachment. The residue at position 62 (Cys62) is an S-glutathionyl cysteine; alternate. The S-palmitoyl cysteine; alternate moiety is linked to residue Cys62. The segment at 65 to 92 (NQQQRTGEPDEEEGTFRSSIRRLSTRRR) is disordered. The residue at position 79 (Thr79) is a Phosphothreonine. A Phosphoserine modification is found at Ser82. Phosphoserine; by PKA and PKC is present on residues Ser83 and Ser88. Basic residues predominate over residues 83 to 92 (SIRRLSTRRR). Residue Thr89 is modified to Phosphothreonine; by PKC.

The protein belongs to the FXYD family. In terms of assembly, homotetramer. Monomer. Regulatory subunit of the sodium/potassium-transporting ATPase (NKA) which is composed of a catalytic alpha subunit, a non-catalytic beta subunit and an additional regulatory subunit. The monomeric form associates with NKA while the oligomeric form does not. Interacts with the catalytic alpha-1 subunit ATP1A1. Also interacts with the catalytic alpha-2 and alpha-3 subunits ATP1A2 and ATP1A3. Very little interaction with the alpha subunits ATP1A1, ATP1A2 or ATP1A3 when phosphorylated at Ser-83. Interacts with non-catalytic beta-1 subunit ATP1B1. Oxidative stress decreases interaction with ATP1A1 but increases interaction with ATP1B1. In terms of processing, major plasma membrane substrate for cAMP-dependent protein kinase (PKA) and protein kinase C (PKC) in several different tissues. Phosphorylated in response to insulin and adrenergic stimulation. Phosphorylation at Ser-88 stimulates sodium/potassium-transporting ATPase activity while the unphosphorylated form inhibits sodium/potassium-transporting ATPase activity. Phosphorylation increases tetramerization, decreases binding to ATP1A1 and reduces inhibition of ATP1A1 activity. Phosphorylation at Ser-83 leads to greatly reduced interaction with ATP1A1, ATP1A2 and ATP1A3. May be phosphorylated by DMPK. Post-translationally, palmitoylation increases half-life and stability and is enhanced upon phosphorylation at Ser-88 by PKA. Present in heart, esophagus, stomach, aorta, skeletal muscle, smooth muscle, and liver but absent from brain and kidney.

It localises to the cell membrane. Its subcellular location is the sarcolemma. The protein localises to the apical cell membrane. The protein resides in the membrane. It is found in the caveola. It localises to the T-tubule. Functionally, associates with and regulates the activity of the sodium/potassium-transporting ATPase (NKA) which transports Na(+) out of the cell and K(+) into the cell. Inhibits NKA activity in its unphosphorylated state and stimulates activity when phosphorylated. Reduces glutathionylation of the NKA beta-1 subunit ATP1B1, thus reversing glutathionylation-mediated inhibition of ATP1B1. Contributes to female sexual development by maintaining the excitability of neurons which secrete gonadotropin-releasing hormone. This Canis lupus familiaris (Dog) protein is Phospholemman.